The chain runs to 414 residues: Patatin-like protein 1 (414 aa).

The PNPLA domain maps to 20–224 (LAIDGGGIRG…AANNPTMVAM (205 aa)). The GXGXXG motif lies at 24–29 (GGGIRG). A GXSXG motif is present at residues 62–66 (GTSTG). Catalysis depends on Ser-64, which acts as the Nucleophile. Asp-211 acts as the Proton acceptor in catalysis. The DGA/G motif lies at 211-213 (DGG).

The protein belongs to the patatin family.

Possesses non-specific lipolytic acyl hydrolase (LAH) activity. Hydrolyzes phospholipids as well as galactolipids. May play a role in disease resistance. This chain is Patatin-like protein 1 (PLP1), found in Oryza sativa subsp. indica (Rice).